A 162-amino-acid polypeptide reads, in one-letter code: Disulfide bond formation protein B (162 aa).

The Cytoplasmic segment spans residues 1–8 (MTPLFRKA). A helical membrane pass occupies residues 9-25 (VWLLFAVSVCAFAGSLA). Topologically, residues 26–43 (AQYVLGMEPCVLCISQRL) are periplasmic. An intrachain disulfide couples Cys35 to Cys38. The chain crosses the membrane as a helical span at residues 44-60 (CVLATALCAAIVLMCRP). Residues 61–67 (RRKAGGL) are Cytoplasmic-facing. Residues 68–85 (FGAVFISIPAVTGISVAA) form a helical membrane-spanning segment. Over 86 to 141 (YQLWLQSLPPGTAPSCGAPWTFRLKGWPLFDWFEPVVRGFGNCAEPDYLLGVALPV) the chain is Periplasmic. An intrachain disulfide couples Cys101 to Cys128. Residues 142 to 160 (WSVAYFLAVALTVWWAWAR) traverse the membrane as a helical segment. At 161–162 (AK) the chain is on the cytoplasmic side.

This sequence belongs to the DsbB family.

Its subcellular location is the cell inner membrane. Functionally, required for disulfide bond formation in some periplasmic proteins. Acts by oxidizing the DsbA protein. The protein is Disulfide bond formation protein B of Neisseria meningitidis serogroup A / serotype 4A (strain DSM 15465 / Z2491).